A 352-amino-acid chain; its full sequence is MKFRRMISEIMDFRNLSEDEAYSLMEMIMAGELDDIKIAAILTALAMKGETVDEITGFARAMRDRSPRVRVSGSHEVVDSCGTGGDSFRSYNISTAAAMIAAAAGVRVAKHGNRAVTGSCGGADILEAAGVNIELDAAAAARSLSDVGISFMFAPLFHRATARVAAVRRSLGFKTVFNILGPLTSPAAAGIQLLGVFDPQLVGPVAEVLRNLGTRCAMVVHGFDANLNPALDEISTVGPTLVAFLEDDEIRIDRLMPPDFGVEVGELEHLRAGSTTAENLELFMDVLRGREDTPEQKSRLDIALANAGALIYLAGLADTLPEGTETAKRTVKSGAALELLEEFVSYTRNLQS.

Residues Gly82, 85 to 86 (GD), Ser90, 92 to 95 (NIST), 110 to 118 (KHGNRAVTG), and Gly122 contribute to the 5-phospho-alpha-D-ribose 1-diphosphate site. Anthranilate is bound at residue Gly82. Ser94 contributes to the Mg(2+) binding site. Residue Asn113 coordinates anthranilate. Anthranilate is bound at residue Arg168. Mg(2+)-binding residues include Asp232 and Glu233.

The protein belongs to the anthranilate phosphoribosyltransferase family. In terms of assembly, homodimer. It depends on Mg(2+) as a cofactor.

It carries out the reaction N-(5-phospho-beta-D-ribosyl)anthranilate + diphosphate = 5-phospho-alpha-D-ribose 1-diphosphate + anthranilate. It participates in amino-acid biosynthesis; L-tryptophan biosynthesis; L-tryptophan from chorismate: step 2/5. In terms of biological role, catalyzes the transfer of the phosphoribosyl group of 5-phosphorylribose-1-pyrophosphate (PRPP) to anthranilate to yield N-(5'-phosphoribosyl)-anthranilate (PRA). The sequence is that of Anthranilate phosphoribosyltransferase from Methanothermobacter thermautotrophicus (strain ATCC 29096 / DSM 1053 / JCM 10044 / NBRC 100330 / Delta H) (Methanobacterium thermoautotrophicum).